We begin with the raw amino-acid sequence, 151 residues long: ALK and LTK ligand 2 (151 aa).

The signal sequence occupies residues 1–25; the sequence is MRVSGRPMLLALLLLLSTVGDRGRA. Cystine bridges form between cysteine 112–cysteine 148 and cysteine 126–cysteine 135.

This sequence belongs to the ALKAL family. Homodimer.

The protein resides in the secreted. It localises to the cell membrane. Cytokine that acts as a physiological ligand for receptor tyrosine kinases LTK and ALK, leading to their activation. Cytokine-binding is sufficient to activate LTK. In contrast, ALKAL2-driven activation of ALK is coupled with heparin-binding to ALK. Stimulation of ALK signaling is involved in neural development and regulation of energy expenditure. The chain is ALK and LTK ligand 2 from Mus musculus (Mouse).